The primary structure comprises 88 residues: uncharacterized protein (88 aa).

Expressed in a wide variety of tissues.

This is an uncharacterized protein from Homo sapiens (Human).